Consider the following 278-residue polypeptide: Large ribosomal subunit protein uL24m (278 aa).

In terms of domain architecture, KOW spans 109–142 (FFPGDLVQVMVGKDKGRQGLVLTISRDSSEVVVD).

The protein belongs to the universal ribosomal protein uL24 family.

It localises to the mitochondrion. The chain is Large ribosomal subunit protein uL24m (mrpl-24) from Caenorhabditis briggsae.